We begin with the raw amino-acid sequence, 533 residues long: Amidophosphoribosyltransferase (533 aa).

The active-site Nucleophile is Cys-2. A Glutamine amidotransferase type-2 domain is found at 2–238 (CGILALMLAD…PGECVFIRRS (237 aa)). Mg(2+) contacts are provided by Asp-383 and Asp-384. Ser-506 is subject to Phosphoserine.

In the C-terminal section; belongs to the purine/pyrimidine phosphoribosyltransferase family. It depends on Mg(2+) as a cofactor.

The enzyme catalyses 5-phospho-beta-D-ribosylamine + L-glutamate + diphosphate = 5-phospho-alpha-D-ribose 1-diphosphate + L-glutamine + H2O. The protein operates within purine metabolism; IMP biosynthesis via de novo pathway; N(1)-(5-phospho-D-ribosyl)glycinamide from 5-phospho-alpha-D-ribose 1-diphosphate: step 1/2. The protein is Amidophosphoribosyltransferase (ade4) of Schizosaccharomyces pombe (strain 972 / ATCC 24843) (Fission yeast).